The primary structure comprises 552 residues: Non-structural protein NS1 (552 aa).

This sequence belongs to the orbivirus non-structural protein NS1 family.

The polypeptide is Non-structural protein NS1 (Segment-5) (Bluetongue virus 13 (isolate USA) (BTV 13)).